The primary structure comprises 262 residues: Ribosomal RNA small subunit methyltransferase A (262 aa).

6 residues coordinate S-adenosyl-L-methionine: N12, L14, G38, E60, D83, and N102.

Belongs to the class I-like SAM-binding methyltransferase superfamily. rRNA adenine N(6)-methyltransferase family. RsmA subfamily.

It localises to the cytoplasm. It carries out the reaction adenosine(1518)/adenosine(1519) in 16S rRNA + 4 S-adenosyl-L-methionine = N(6)-dimethyladenosine(1518)/N(6)-dimethyladenosine(1519) in 16S rRNA + 4 S-adenosyl-L-homocysteine + 4 H(+). Its function is as follows. Specifically dimethylates two adjacent adenosines (A1518 and A1519) in the loop of a conserved hairpin near the 3'-end of 16S rRNA in the 30S particle. May play a critical role in biogenesis of 30S subunits. The sequence is that of Ribosomal RNA small subunit methyltransferase A from Pelagibacter ubique (strain HTCC1062).